A 456-amino-acid polypeptide reads, in one-letter code: Adenylosuccinate lyase (456 aa).

Residues 15 to 16 (RY), 90 to 92 (NHD), and 122 to 123 (TS) contribute to the N(6)-(1,2-dicarboxyethyl)-AMP site. The Proton donor/acceptor role is filled by His-171. N(6)-(1,2-dicarboxyethyl)-AMP is bound at residue Gln-247. The active-site Proton donor/acceptor is the Ser-295. Residues Ser-296, 301 to 303 (KVN), Asn-309, Arg-335, and 340 to 344 (STVLR) each bind N(6)-(1,2-dicarboxyethyl)-AMP.

This sequence belongs to the lyase 1 family. Adenylosuccinate lyase subfamily. Homotetramer. Residues from neighboring subunits contribute catalytic and substrate-binding residues to each active site.

It carries out the reaction N(6)-(1,2-dicarboxyethyl)-AMP = fumarate + AMP. It catalyses the reaction (2S)-2-[5-amino-1-(5-phospho-beta-D-ribosyl)imidazole-4-carboxamido]succinate = 5-amino-1-(5-phospho-beta-D-ribosyl)imidazole-4-carboxamide + fumarate. Its pathway is purine metabolism; AMP biosynthesis via de novo pathway; AMP from IMP: step 2/2. The protein operates within purine metabolism; IMP biosynthesis via de novo pathway; 5-amino-1-(5-phospho-D-ribosyl)imidazole-4-carboxamide from 5-amino-1-(5-phospho-D-ribosyl)imidazole-4-carboxylate: step 2/2. Functionally, catalyzes two reactions in de novo purine nucleotide biosynthesis. Catalyzes the breakdown of 5-aminoimidazole- (N-succinylocarboxamide) ribotide (SAICAR or 2-[5-amino-1-(5-phospho-beta-D-ribosyl)imidazole-4-carboxamido]succinate) to 5-aminoimidazole-4-carboxamide ribotide (AICAR or 5-amino-1-(5-phospho-beta-D-ribosyl)imidazole-4-carboxamide) and fumarate, and of adenylosuccinate (ADS or N(6)-(1,2-dicarboxyethyl)-AMP) to adenosine monophosphate (AMP) and fumarate. The polypeptide is Adenylosuccinate lyase (purB) (Buchnera aphidicola subsp. Acyrthosiphon pisum (strain APS) (Acyrthosiphon pisum symbiotic bacterium)).